An 840-amino-acid chain; its full sequence is 9-beta-pimara-7,15-diene synthase, chloroplastic (840 aa).

A chloroplast-targeting transit peptide spans 1–56; sequence MASPMEAVARSSLVLAPRRRRALGLLPAAAAPFVLDCRRRHNGGMRRPHVSFACSA. The Mg(2+) site is built by aspartate 589, aspartate 593, asparagine 733, serine 737, and glutamate 741. The short motif at 589-593 is the DDXXD motif element; sequence DDFFD.

It belongs to the terpene synthase family. Mg(2+) is required as a cofactor.

The protein resides in the plastid. Its subcellular location is the chloroplast. It catalyses the reaction 9alpha-copalyl diphosphate = 9beta-pimara-7,15-diene + diphosphate. Involved in the biosynthesis of momilactone A and B phytoalexins. Catalyzes the conversion of syn-copalyl diphosphate to the phytoalexin precursor syn-pimara-7,15-diene. This Oryza sativa subsp. indica (Rice) protein is 9-beta-pimara-7,15-diene synthase, chloroplastic.